A 522-amino-acid polypeptide reads, in one-letter code: Response regulator mcs4 (522 aa).

Residues 148–274 form a disordered region; that stretch reads DSLESPVSAP…RSISHSSLYT (127 aa). Residues 174–194 are compositionally biased toward polar residues; it reads NLRNASRTRSHQTLPSSNVNK. The segment covering 244 to 255 has biased composition (basic and acidic residues); that stretch reads RSDESTAEKLAK. Over residues 260 to 274 the composition is skewed to polar residues; that stretch reads TPTNSRSISHSSLYT. The Response regulatory domain occupies 363-505; sequence NVLIVEDNII…WLEKKITEWG (143 aa). At aspartate 412 the chain carries 4-aspartylphosphate.

Its subcellular location is the cytoplasm. In terms of biological role, response regulator that coordinately controls the stress activated wak1-wis1-sty1 MAP kinase pathway and fission yeast cell cycle. This Schizosaccharomyces pombe (strain 972 / ATCC 24843) (Fission yeast) protein is Response regulator mcs4 (mcs4).